The primary structure comprises 193 residues: Potassium-transporting ATPase KdpC subunit (193 aa).

The helical transmembrane segment at Pro7 to Met27 threads the bilayer.

Belongs to the KdpC family. As to quaternary structure, the system is composed of three essential subunits: KdpA, KdpB and KdpC.

The protein resides in the cell inner membrane. In terms of biological role, part of the high-affinity ATP-driven potassium transport (or Kdp) system, which catalyzes the hydrolysis of ATP coupled with the electrogenic transport of potassium into the cytoplasm. This subunit acts as a catalytic chaperone that increases the ATP-binding affinity of the ATP-hydrolyzing subunit KdpB by the formation of a transient KdpB/KdpC/ATP ternary complex. In Burkholderia orbicola (strain MC0-3), this protein is Potassium-transporting ATPase KdpC subunit.